We begin with the raw amino-acid sequence, 98 residues long: UPF0390 protein zgc136864 (98 aa).

The span at 1-30 (MAQGKQKFKAQRPGGAKKHQNKPKGLKKGG) shows a compositional bias: basic residues. Disordered regions lie at residues 1–38 (MAQG…PKKA) and 63–98 (TQKA…GPSK). Over residues 83-98 (KSGTAGAPKPAAGPSK) the composition is skewed to low complexity.

The protein belongs to the UPF0390 family.

The protein is UPF0390 protein zgc136864 of Danio rerio (Zebrafish).